The following is a 644-amino-acid chain: Exoribonuclease 2 (644 aa).

The region spanning 189 to 516 (REDLTALNFV…NHRLLKAVIT (328 aa)) is the RNB domain. An S1 motif domain is found at 561–643 (DIRFNAEIID…ETRGIVAKPA (83 aa)).

This sequence belongs to the RNR ribonuclease family. RNase II subfamily.

The protein localises to the cytoplasm. It catalyses the reaction Exonucleolytic cleavage in the 3'- to 5'-direction to yield nucleoside 5'-phosphates.. Functionally, involved in mRNA degradation. Hydrolyzes single-stranded polyribonucleotides processively in the 3' to 5' direction. The sequence is that of Exoribonuclease 2 from Pectobacterium atrosepticum (strain SCRI 1043 / ATCC BAA-672) (Erwinia carotovora subsp. atroseptica).